A 109-amino-acid polypeptide reads, in one-letter code: Transmembrane protein 233 (109 aa).

Residues 1-30 (MSQYAPSPDFKRALDSSPEANTEDDKTEED) form a disordered region. The Cytoplasmic portion of the chain corresponds to 1–41 (MSQYAPSPDFKRALDSSPEANTEDDKTEEDVPMPKNYLWLT). A compositionally biased stretch (acidic residues) spans 21-30 (NTEDDKTEED). The helical intramembrane region spans 42-62 (IVSCFCPAYPINIVALVFSIM). Residues 63 to 84 (SLNSYNDGDYEGARRLGRNAKW) are Cytoplasmic-facing. Residues 85-105 (VAIASIIIGLLIIGISCAVHF) form a helical membrane-spanning segment. Topologically, residues 106–109 (TRNA) are extracellular.

Belongs to the CD225/Dispanin family. Interacts with the giant stinging tree toxin ExTxA (AC P0DQP3). Interacts with Nav1.7/SCN9A. Interacts with Nav1.1/SCN1A, Nav1.2/SCN2A, Nav1.3/SCN3A, Nav1.4/SCN4A, Nav1.5/SCN5A, and Nav1.6/SCN8A.

It localises to the cell membrane. Functionally, probable accessory protein of voltage-gated sodium channels. The polypeptide is Transmembrane protein 233 (Homo sapiens (Human)).